We begin with the raw amino-acid sequence, 187 residues long: Probable nicotinate-nucleotide adenylyltransferase (187 aa).

This sequence belongs to the NadD family.

The enzyme catalyses nicotinate beta-D-ribonucleotide + ATP + H(+) = deamido-NAD(+) + diphosphate. Its pathway is cofactor biosynthesis; NAD(+) biosynthesis; deamido-NAD(+) from nicotinate D-ribonucleotide: step 1/1. Its function is as follows. Catalyzes the reversible adenylation of nicotinate mononucleotide (NaMN) to nicotinic acid adenine dinucleotide (NaAD). This chain is Probable nicotinate-nucleotide adenylyltransferase, found in Anaeromyxobacter dehalogenans (strain 2CP-1 / ATCC BAA-258).